The chain runs to 455 residues: Bifunctional protein GlmU (455 aa).

Residues 1–228 (MYKCALVLAA…YEETIGVNSR (228 aa)) form a pyrophosphorylase region. UDP-N-acetyl-alpha-D-glucosamine contacts are provided by residues 8-11 (LAAG), Lys-22, Gln-73, and 78-79 (GT). Mg(2+) is bound at residue Asp-103. Residues Gly-140, Glu-154, Asn-169, and Asn-226 each coordinate UDP-N-acetyl-alpha-D-glucosamine. Asn-226 lines the Mg(2+) pocket. The linker stretch occupies residues 229–249 (VQLAEAEEILKNRINLMHMEN). The tract at residues 250–455 (GVTLIDPRTT…GWVDKKGLKK (206 aa)) is N-acetyltransferase. UDP-N-acetyl-alpha-D-glucosamine contacts are provided by Arg-331 and Lys-349. The Proton acceptor role is filled by His-361. UDP-N-acetyl-alpha-D-glucosamine contacts are provided by Tyr-364 and Asn-375. Residues 384–385 (NY), Ala-421, and Arg-438 contribute to the acetyl-CoA site.

This sequence in the N-terminal section; belongs to the N-acetylglucosamine-1-phosphate uridyltransferase family. In the C-terminal section; belongs to the transferase hexapeptide repeat family. As to quaternary structure, homotrimer. Mg(2+) serves as cofactor.

It localises to the cytoplasm. The enzyme catalyses alpha-D-glucosamine 1-phosphate + acetyl-CoA = N-acetyl-alpha-D-glucosamine 1-phosphate + CoA + H(+). It carries out the reaction N-acetyl-alpha-D-glucosamine 1-phosphate + UTP + H(+) = UDP-N-acetyl-alpha-D-glucosamine + diphosphate. It functions in the pathway nucleotide-sugar biosynthesis; UDP-N-acetyl-alpha-D-glucosamine biosynthesis; N-acetyl-alpha-D-glucosamine 1-phosphate from alpha-D-glucosamine 6-phosphate (route II): step 2/2. The protein operates within nucleotide-sugar biosynthesis; UDP-N-acetyl-alpha-D-glucosamine biosynthesis; UDP-N-acetyl-alpha-D-glucosamine from N-acetyl-alpha-D-glucosamine 1-phosphate: step 1/1. Its pathway is bacterial outer membrane biogenesis; LPS lipid A biosynthesis. Its function is as follows. Catalyzes the last two sequential reactions in the de novo biosynthetic pathway for UDP-N-acetylglucosamine (UDP-GlcNAc). The C-terminal domain catalyzes the transfer of acetyl group from acetyl coenzyme A to glucosamine-1-phosphate (GlcN-1-P) to produce N-acetylglucosamine-1-phosphate (GlcNAc-1-P), which is converted into UDP-GlcNAc by the transfer of uridine 5-monophosphate (from uridine 5-triphosphate), a reaction catalyzed by the N-terminal domain. The protein is Bifunctional protein GlmU of Clostridium beijerinckii (strain ATCC 51743 / NCIMB 8052) (Clostridium acetobutylicum).